We begin with the raw amino-acid sequence, 760 residues long: Xaa-Pro dipeptidyl-peptidase (760 aa).

Catalysis depends on charge relay system residues serine 349, aspartate 469, and histidine 499.

This sequence belongs to the peptidase S15 family. In terms of assembly, homodimer.

It localises to the cytoplasm. The enzyme catalyses Hydrolyzes Xaa-Pro-|- bonds to release unblocked, N-terminal dipeptides from substrates including Ala-Pro-|-p-nitroanilide and (sequentially) Tyr-Pro-|-Phe-Pro-|-Gly-Pro-|-Ile.. In terms of biological role, removes N-terminal dipeptides sequentially from polypeptides having unsubstituted N-termini provided that the penultimate residue is proline. In Streptococcus pyogenes serotype M12 (strain MGAS9429), this protein is Xaa-Pro dipeptidyl-peptidase.